Consider the following 1403-residue polypeptide: DNA-directed RNA polymerase subunit beta' (1403 aa).

4 residues coordinate Zn(2+): Cys-70, Cys-72, Cys-85, and Cys-88. Positions 461, 463, and 465 each coordinate Mg(2+). The tract at residues 687 to 708 (QQISQEETTGDRDGKRETRKQP) is disordered. Over residues 695 to 706 (TGDRDGKRETRK) the composition is skewed to basic and acidic residues. Zn(2+) is bound by residues Cys-805, Cys-879, Cys-886, and Cys-889. The disordered stretch occupies residues 1381–1403 (THGDTGPLGEPSRPVGTQTTGAA).

The protein belongs to the RNA polymerase beta' chain family. In terms of assembly, the RNAP catalytic core consists of 2 alpha, 1 beta, 1 beta' and 1 omega subunit. When a sigma factor is associated with the core the holoenzyme is formed, which can initiate transcription. The cofactor is Mg(2+). Zn(2+) is required as a cofactor.

The enzyme catalyses RNA(n) + a ribonucleoside 5'-triphosphate = RNA(n+1) + diphosphate. Functionally, DNA-dependent RNA polymerase catalyzes the transcription of DNA into RNA using the four ribonucleoside triphosphates as substrates. This is DNA-directed RNA polymerase subunit beta' from Myxococcus xanthus (strain DK1622).